Here is a 287-residue protein sequence, read N- to C-terminus: 2-dehydro-3-deoxyphosphooctonate aldolase (287 aa).

This sequence belongs to the KdsA family.

It localises to the cytoplasm. It catalyses the reaction D-arabinose 5-phosphate + phosphoenolpyruvate + H2O = 3-deoxy-alpha-D-manno-2-octulosonate-8-phosphate + phosphate. The protein operates within carbohydrate biosynthesis; 3-deoxy-D-manno-octulosonate biosynthesis; 3-deoxy-D-manno-octulosonate from D-ribulose 5-phosphate: step 2/3. It functions in the pathway bacterial outer membrane biogenesis; lipopolysaccharide biosynthesis. The chain is 2-dehydro-3-deoxyphosphooctonate aldolase from Rhodopseudomonas palustris (strain TIE-1).